We begin with the raw amino-acid sequence, 198 residues long: Glycerol-3-phosphate acyltransferase (198 aa).

6 consecutive transmembrane segments (helical) span residues Met-1–Ala-21, Val-55–Leu-75, Trp-79–Trp-99, Ile-111–Ile-131, Ile-136–Phe-156, and Gly-158–Trp-178.

The protein belongs to the PlsY family. In terms of assembly, probably interacts with PlsX.

Its subcellular location is the cell inner membrane. It catalyses the reaction an acyl phosphate + sn-glycerol 3-phosphate = a 1-acyl-sn-glycero-3-phosphate + phosphate. It participates in lipid metabolism; phospholipid metabolism. Functionally, catalyzes the transfer of an acyl group from acyl-phosphate (acyl-PO(4)) to glycerol-3-phosphate (G3P) to form lysophosphatidic acid (LPA). This enzyme utilizes acyl-phosphate as fatty acyl donor, but not acyl-CoA or acyl-ACP. The protein is Glycerol-3-phosphate acyltransferase of Prochlorococcus marinus (strain NATL2A).